The primary structure comprises 360 residues: uncharacterized protein (360 aa).

This is an uncharacterized protein from Escherichia coli (strain UTI89 / UPEC).